Consider the following 227-residue polypeptide: Urease accessory protein UreF (227 aa).

The protein belongs to the UreF family. UreD, UreF and UreG form a complex that acts as a GTP-hydrolysis-dependent molecular chaperone, activating the urease apoprotein by helping to assemble the nickel containing metallocenter of UreC. The UreE protein probably delivers the nickel.

It is found in the cytoplasm. Required for maturation of urease via the functional incorporation of the urease nickel metallocenter. The polypeptide is Urease accessory protein UreF (Actinobacillus pleuropneumoniae (Haemophilus pleuropneumoniae)).